The primary structure comprises 154 residues: Large ribosomal subunit protein uL23 (154 aa).

It belongs to the universal ribosomal protein uL23 family.

Functionally, this protein binds to a specific region on the 26S rRNA. The polypeptide is Large ribosomal subunit protein uL23 (RPL23A) (Daucus carota (Wild carrot)).